Consider the following 156-residue polypeptide: Phosphopantetheine adenylyltransferase (156 aa).

Residue Thr-9 coordinates substrate. Residues 9–10 and His-17 contribute to the ATP site; that span reads TF. Residues Lys-41, Leu-73, and Arg-87 each coordinate substrate. ATP contacts are provided by residues 88-90, Glu-98, and 123-129; these read GVR and WAFVSST.

The protein belongs to the bacterial CoaD family. In terms of assembly, homohexamer. Requires Mg(2+) as cofactor.

The protein localises to the cytoplasm. It catalyses the reaction (R)-4'-phosphopantetheine + ATP + H(+) = 3'-dephospho-CoA + diphosphate. It functions in the pathway cofactor biosynthesis; coenzyme A biosynthesis; CoA from (R)-pantothenate: step 4/5. Functionally, reversibly transfers an adenylyl group from ATP to 4'-phosphopantetheine, yielding dephospho-CoA (dPCoA) and pyrophosphate. The chain is Phosphopantetheine adenylyltransferase from Haemophilus influenzae (strain ATCC 51907 / DSM 11121 / KW20 / Rd).